The primary structure comprises 254 residues: uncharacterized protein (254 aa).

This is an uncharacterized protein from Escherichia coli (strain K12).